The primary structure comprises 692 residues: Ena/VASP-like protein (692 aa).

In terms of domain architecture, WH1 spans 1–112; the sequence is MSEQSICQAR…NAMLFALNIM (112 aa). Disordered regions lie at residues 116–310, 466–518, and 531–650; these read DGGP…VQKN, SAAM…YEES, and KLRK…NDVS. 2 stretches are compositionally biased toward polar residues: residues 123–132 and 159–169; these read RQAQNIQNGP and STTVSTLQINV. The segment covering 214 to 226 has biased composition (low complexity); that stretch reads SSKSTNKSSNRTS. Polar residues predominate over residues 231–267; that stretch reads LQNSHCGSEPSTSQSSAFSPIRPSNGTVSRSIKQISL. 2 stretches are compositionally biased toward low complexity: residues 288 to 310 and 466 to 479; these read PSLS…VQKN and SAAM…APAP. Over residues 480–506 the composition is skewed to pro residues; that stretch reads ASGPPPPPPPGPPPPSGGTPPPAPPLP. An EVH2 block A region spans residues 522–542; the sequence is GLAAALAGAKLRKVQRPEDGS. Residues 522–689 form an EVH2 region; the sequence is GLAAALAGAK…DAIRQELSRI (168 aa). Positions 531 to 534 match the KLKR motif; that stretch reads KLRK. Positions 563–580 are EVH2 block B; sequence GGLMEEMNKLLAKRRKAA. Positions 597-617 are enriched in polar residues; it reads EDASLSSSPVTRGPTPQNSSD. Over residues 618–628 the composition is skewed to basic and acidic residues; sequence LGKKPWERSNS. The segment at 655–689 is EVH2 block C; sequence DFDRMKQEILEEVVRELHKVKEEIIDAIRQELSRI.

Belongs to the Ena/VASP family. As to expression, during embryonic and tadpole development, expressed in the cement gland, brain, neural tube, myotome and neural placodes, including the otic, lateral line and olfactory placodes. All isoforms show similar spatial expression patterns.

It localises to the cytoplasm. It is found in the cytoskeleton. Its subcellular location is the stress fiber. The protein resides in the cell projection. The protein localises to the lamellipodium. Functionally, ena/VASP proteins are actin-associated proteins involved in a range of processes dependent on cytoskeleton remodeling and cell polarity such as axon guidance and lamellipodial and filopodial dynamics in migrating cells. Evl enhances actin nucleation and polymerization. This Xenopus laevis (African clawed frog) protein is Ena/VASP-like protein.